The primary structure comprises 852 residues: Lon protease homolog 2, peroxisomal (852 aa).

Serine 2 is subject to N-acetylserine. Residues 13-222 enclose the Lon N-terminal domain; that stretch reads LPLLLTHEGV…MTIPLLVRQI (210 aa). Position 375-382 (375-382) interacts with ATP; that stretch reads GPPGVGKT. Positions 651 to 837 constitute a Lon proteolytic domain; that stretch reads LSQPGVAIGL…DEVLNAAFDG (187 aa). Catalysis depends on residues serine 743 and lysine 786. Positions 850–852 match the Microbody targeting signal motif; sequence SKL.

Belongs to the peptidase S16 family. Interacts with PEX5. Interacts with TYSND1. May interact with enzymes involved in beta-oxidation of fatty acids, including ACOX1/AOX. As to expression, widely expressed, with high levels in the liver, kidney and pancreas.

Its subcellular location is the peroxisome matrix. It catalyses the reaction Hydrolysis of proteins in presence of ATP.. Functionally, ATP-dependent serine protease that mediates the selective degradation of misfolded and unassembled polypeptides in the peroxisomal matrix. Necessary for type 2 peroxisome targeting signal (PTS2)-containing protein processing and facilitates peroxisome matrix protein import. May indirectly regulate peroxisomal fatty acid beta-oxidation through degradation of the self-processed forms of TYSND1. In Homo sapiens (Human), this protein is Lon protease homolog 2, peroxisomal.